The chain runs to 133 residues: Fluoride-specific ion channel FluC 4 (133 aa).

The next 3 membrane-spanning stretches (helical) occupy residues 7–27 (ILVL…SGYV), 37–57 (WGTF…AGLG), and 60–80 (LGGI…LLGG). Na(+)-binding residues include Gly-79 and Thr-82. The chain crosses the membrane as a helical span at residues 107-127 (IVASALLCVLAVAAGYGGIMW).

It belongs to the fluoride channel Fluc/FEX (TC 1.A.43) family.

It localises to the cell inner membrane. The enzyme catalyses fluoride(in) = fluoride(out). Na(+) is not transported, but it plays an essential structural role and its presence is essential for fluoride channel function. Functionally, fluoride-specific ion channel. Important for reducing fluoride concentration in the cell, thus reducing its toxicity. The chain is Fluoride-specific ion channel FluC 4 from Brucella abortus biovar 1 (strain 9-941).